A 115-amino-acid chain; its full sequence is NADH-ubiquinone oxidoreductase chain 3 (115 aa).

3 helical membrane-spanning segments follow: residues 3 to 23 (LILM…IVAF), 56 to 76 (FFLV…LLPL), and 84 to 104 (PTLM…GLIY).

Belongs to the complex I subunit 3 family.

Its subcellular location is the mitochondrion membrane. The enzyme catalyses a ubiquinone + NADH + 5 H(+)(in) = a ubiquinol + NAD(+) + 4 H(+)(out). Functionally, core subunit of the mitochondrial membrane respiratory chain NADH dehydrogenase (Complex I) that is believed to belong to the minimal assembly required for catalysis. Complex I functions in the transfer of electrons from NADH to the respiratory chain. The immediate electron acceptor for the enzyme is believed to be ubiquinone. The sequence is that of NADH-ubiquinone oxidoreductase chain 3 (MT-ND3) from Polypterus ornatipinnis (Ornate bichir).